A 210-amino-acid polypeptide reads, in one-letter code: SAP domain-containing ribonucleoprotein (210 aa).

Ala-2 carries the post-translational modification N-acetylalanine. One can recognise an SAP domain in the interval 8–42 (LHKLKLAELKQECLARGLETKGIKQDLINRLQAYL). An N6-acetyllysine modification is found at Lys-10. A compositionally biased stretch (acidic residues) spans 45–64 (HAEEEANEEDVLGDETEEEE). The tract at residues 45–87 (HAEEEANEEDVLGDETEEEEPKPIELPVKEEEPPEKAVDMASE) is disordered. Positions 65-87 (PKPIELPVKEEEPPEKAVDMASE) are enriched in basic and acidic residues. N6-acetyllysine is present on Lys-142. The tract at residues 162-210 (SSISRKSEDDEKLKKRKERFGIVTSSAGTGTTEDTEAKKRKRAERFGIA) is disordered. Phosphoserine is present on Ser-163. Residues 184–193 (VTSSAGTGTT) are compositionally biased toward polar residues.

Belongs to the SAP domain-containing ribonucleoprotein family. As to quaternary structure, interacts with DDX39A. Interacts with FUS. Interacts (via the C-terminal domain) with DDX39B; the interaction is direct and facilitates RNA binding of DDX39B. Component of the transcription/export (TREX) complex at least composed of ALYREF/THOC4, DDX39B, SARNP/CIP29, CHTOP and the THO subcomplex; TREX seems to have dynamic structure involving ATP-dependent remodeling; in the complex interacts directly with DDX39B in a ATP-dependent manner which bridges it to ALYREF/THOC4.

It is found in the nucleus. The protein resides in the nucleus speckle. Its function is as follows. Binds both single-stranded and double-stranded DNA with higher affinity for the single-stranded form. Specifically binds to scaffold/matrix attachment region DNA. Also binds single-stranded RNA. Enhances RNA unwinding activity of DDX39A. May participate in important transcriptional or translational control of cell growth, metabolism and carcinogenesis. Component of the TREX complex which is thought to couple mRNA transcription, processing and nuclear export, and specifically associates with spliced mRNA and not with unspliced pre-mRNA. The TREX complex is recruited to spliced mRNAs by a transcription-independent mechanism, binds to mRNA upstream of the exon-junction complex (EJC) and is recruited in a splicing- and cap-dependent manner to a region near the 5' end of the mRNA where it functions in mRNA export to the cytoplasm via the TAP/NXF1 pathway. Associates with DDX39B, which facilitates RNA binding of DDX39B and likely plays a role in mRNA export. The polypeptide is SAP domain-containing ribonucleoprotein (Sarnp) (Mus musculus (Mouse)).